The sequence spans 184 residues: Large ribosomal subunit protein uL6 (184 aa).

This sequence belongs to the universal ribosomal protein uL6 family. In terms of assembly, part of the 50S ribosomal subunit.

Its function is as follows. This protein binds to the 23S rRNA, and is important in its secondary structure. It is located near the subunit interface in the base of the L7/L12 stalk, and near the tRNA binding site of the peptidyltransferase center. The protein is Large ribosomal subunit protein uL6 of Thermomicrobium roseum (strain ATCC 27502 / DSM 5159 / P-2).